A 329-amino-acid polypeptide reads, in one-letter code: Ketol-acid reductoisomerase (NADP(+)) (329 aa).

Positions 2 to 181 constitute a KARI N-terminal Rossmann domain; that stretch reads VQKYYESDAD…GATRAVVFET (180 aa). Residues 25–28, Arg48, Ser52, and 82–85 contribute to the NADP(+) site; these read YGSQ and DENQ. His107 is a catalytic residue. Gly133 contacts NADP(+). Positions 182-327 constitute a KARI C-terminal knotted domain; the sequence is TFAEETETDL…AEIRGFMPQF (146 aa). Residues Asp190, Glu194, Glu226, and Glu230 each coordinate Mg(2+). Substrate is bound at residue Ser251.

It belongs to the ketol-acid reductoisomerase family. Requires Mg(2+) as cofactor.

The catalysed reaction is (2R)-2,3-dihydroxy-3-methylbutanoate + NADP(+) = (2S)-2-acetolactate + NADPH + H(+). It catalyses the reaction (2R,3R)-2,3-dihydroxy-3-methylpentanoate + NADP(+) = (S)-2-ethyl-2-hydroxy-3-oxobutanoate + NADPH + H(+). The protein operates within amino-acid biosynthesis; L-isoleucine biosynthesis; L-isoleucine from 2-oxobutanoate: step 2/4. Its pathway is amino-acid biosynthesis; L-valine biosynthesis; L-valine from pyruvate: step 2/4. Functionally, involved in the biosynthesis of branched-chain amino acids (BCAA). Catalyzes an alkyl-migration followed by a ketol-acid reduction of (S)-2-acetolactate (S2AL) to yield (R)-2,3-dihydroxy-isovalerate. In the isomerase reaction, S2AL is rearranged via a Mg-dependent methyl migration to produce 3-hydroxy-3-methyl-2-ketobutyrate (HMKB). In the reductase reaction, this 2-ketoacid undergoes a metal-dependent reduction by NADPH to yield (R)-2,3-dihydroxy-isovalerate. This chain is Ketol-acid reductoisomerase (NADP(+)), found in Methanoculleus marisnigri (strain ATCC 35101 / DSM 1498 / JR1).